We begin with the raw amino-acid sequence, 436 residues long: Calcium/calmodulin-regulated receptor-like kinase 2 (436 aa).

Residues 7–34 (LVVIGISVGLALGLLLALLLFFAIKWYY) traverse the membrane as a helical segment. The tract at residues 65 to 88 (DRANTESSQPPENGAPTQHQPWWN) is disordered. Residues 69 to 88 (TESSQPPENGAPTQHQPWWN) show a composition bias toward polar residues. The Protein kinase domain maps to 114–375 (QNFTTVLGQG…PSIGEVTQFI (262 aa)). Residues 120–128 (LGQGSFGPV) and Lys-142 contribute to the ATP site. The residue at position 187 (Tyr-187) is a Phosphotyrosine. The active-site Proton acceptor is the Asp-239. Residue Thr-276 is modified to Phosphothreonine. Tyr-284 carries the post-translational modification Phosphotyrosine.

It belongs to the protein kinase superfamily. Ser/Thr protein kinase family.

It localises to the cell membrane. The catalysed reaction is L-seryl-[protein] + ATP = O-phospho-L-seryl-[protein] + ADP + H(+). It catalyses the reaction L-threonyl-[protein] + ATP = O-phospho-L-threonyl-[protein] + ADP + H(+). This Arabidopsis thaliana (Mouse-ear cress) protein is Calcium/calmodulin-regulated receptor-like kinase 2.